The sequence spans 774 residues: Chondroitin sulfate synthase 2 (774 aa).

At 1-15 (MRASLLLSVLRPAGP) the chain is on the cytoplasmic side. The helical; Signal-anchor for type II membrane protein transmembrane segment at 16–34 (VAVGISLGFTLSLLSVTWV) threads the bilayer. The Lumenal portion of the chain corresponds to 35-774 (EEPCGPGPPQ…LFEQEQGNST (740 aa)). The segment at 37–103 (PCGPGPPQPG…AQPGQATKKA (67 aa)) is disordered. Polar residues predominate over residues 54-67 (GNTNAARRPNSVQP). N138 and N361 each carry an N-linked (GlcNAc...) asparagine glycan. An a divalent metal cation-binding site is contributed by D616.

Belongs to the chondroitin N-acetylgalactosaminyltransferase family. Interacts with PRKN. Mn(2+) is required as a cofactor. Requires Co(2+) as cofactor. As to expression, isoform 1, isoform 2 and isoform 3 are expressed in brain (at protein level).

It is found in the golgi apparatus. Its subcellular location is the golgi stack membrane. It localises to the cytoplasm. The protein localises to the cytosol. The protein resides in the mitochondrion. It is found in the mitochondrion matrix. It carries out the reaction 3-O-(beta-D-GlcA-(1-&gt;3)-beta-D-GalNAc-(1-&gt;4)-beta-D-GlcA-(1-&gt;3)-beta-D-Gal-(1-&gt;3)-beta-D-Gal-(1-&gt;4)-beta-D-Xyl)-L-seryl-[protein] + UDP-N-acetyl-alpha-D-galactosamine = 3-O-(beta-D-GalNAc-(1-&gt;4)-beta-D-GlcA-(1-&gt;3)-beta-D-GalNAc-(1-&gt;4)-beta-D-GlcA-(1-&gt;3)-beta-D-Gal-(1-&gt;3)-beta-D-Gal-(1-&gt;4)-beta-D-Xyl)-L-seryl-[protein] + UDP + H(+). The enzyme catalyses 3-O-{beta-D-GlcA-(1-&gt;3)-[beta-D-GalNAc-(1-&gt;4)-beta-D-GlcA-(1-&gt;3)](n)-beta-D-GalNAc-(1-&gt;4)-beta-D-GlcA-(1-&gt;3)-beta-D-Gal-(1-&gt;3)-beta-D-Gal-(1-&gt;4)-beta-D-Xyl}-L-seryl-[protein] + UDP-N-acetyl-alpha-D-galactosamine = 3-O-{[beta-D-GalNAc-(1-&gt;4)-beta-D-GlcA-(1-&gt;3)](n+1)-beta-D-GalNAc-(1-&gt;4)-beta-D-GlcA-(1-&gt;3)-beta-D-Gal-(1-&gt;3)-beta-D-Gal-(1-&gt;4)-beta-D-Xyl}-L-seryl-[protein] + UDP + H(+). It catalyses the reaction 3-O-(beta-D-GalNAc-(1-&gt;4)-beta-D-GlcA-(1-&gt;3)-beta-D-Gal-(1-&gt;3)-beta-D-Gal-(1-&gt;4)-beta-D-Xyl)-L-seryl-[protein] + UDP-alpha-D-glucuronate = 3-O-(beta-D-GlcA-(1-&gt;3)-beta-D-GalNAc-(1-&gt;4)-beta-D-GlcA-(1-&gt;3)-beta-D-Gal-(1-&gt;3)-beta-D-Gal-(1-&gt;4)-beta-D-Xyl)-L-seryl-[protein] + UDP + H(+). The catalysed reaction is 3-O-{[beta-D-GalNAc-(1-&gt;4)-beta-D-GlcA-(1-&gt;3)](n)-beta-D-GalNAc-(1-&gt;4)-beta-D-GlcA-(1-&gt;3)-beta-D-Gal-(1-&gt;3)-beta-D-Gal-(1-&gt;4)-beta-D-Xyl}-L-seryl-[protein] + UDP-alpha-D-glucuronate = 3-O-{beta-D-GlcA-(1-&gt;3)-[beta-D-GalNAc-(1-&gt;4)-beta-D-GlcA-(1-&gt;3)](n)-beta-D-GalNAc-(1-&gt;4)-beta-D-GlcA-(1-&gt;3)-beta-D-Gal-(1-&gt;3)-beta-D-Gal-(1-&gt;4)-beta-D-Xyl}-L-seryl-[protein] + UDP + H(+). Its function is as follows. Has both beta-1,3-glucuronic acid and beta-1,4-N-acetylgalactosamine transferase activity. Transfers glucuronic acid (GlcUA) from UDP-GlcUA and N-acetylgalactosamine (GalNAc) from UDP-GalNAc to the non-reducing end of the elongating chondroitin polymer. Seems to act as a specific activating factor for CHSY1 in chondroitin polymerization. May facilitate PRKN transport into the mitochondria. In collaboration with PRKN, may enhance cell viability and protect cells from oxidative stress. This chain is Chondroitin sulfate synthase 2, found in Mus musculus (Mouse).